The sequence spans 314 residues: Methionyl-tRNA formyltransferase (314 aa).

A (6S)-5,6,7,8-tetrahydrofolate-binding site is contributed by 110-113; that stretch reads SLLP.

This sequence belongs to the Fmt family.

It catalyses the reaction L-methionyl-tRNA(fMet) + (6R)-10-formyltetrahydrofolate = N-formyl-L-methionyl-tRNA(fMet) + (6S)-5,6,7,8-tetrahydrofolate + H(+). Attaches a formyl group to the free amino group of methionyl-tRNA(fMet). The formyl group appears to play a dual role in the initiator identity of N-formylmethionyl-tRNA by promoting its recognition by IF2 and preventing the misappropriation of this tRNA by the elongation apparatus. The protein is Methionyl-tRNA formyltransferase of Levilactobacillus brevis (strain ATCC 367 / BCRC 12310 / CIP 105137 / JCM 1170 / LMG 11437 / NCIMB 947 / NCTC 947) (Lactobacillus brevis).